A 291-amino-acid chain; its full sequence is Ribose-phosphate pyrophosphokinase (291 aa).

Residues 34-36 (DGE) and 93-94 (RQ) each bind ATP. Mg(2+) is bound by residues H127 and D165. Residue K188 is part of the active site. Residues R190, D216, and 220–224 (STGGT) contribute to the D-ribose 5-phosphate site.

Belongs to the ribose-phosphate pyrophosphokinase family. Class III (archaeal) subfamily. It depends on Mg(2+) as a cofactor.

The protein localises to the cytoplasm. The enzyme catalyses D-ribose 5-phosphate + ATP = 5-phospho-alpha-D-ribose 1-diphosphate + AMP + H(+). The protein operates within metabolic intermediate biosynthesis; 5-phospho-alpha-D-ribose 1-diphosphate biosynthesis; 5-phospho-alpha-D-ribose 1-diphosphate from D-ribose 5-phosphate (route I): step 1/1. Involved in the biosynthesis of the central metabolite phospho-alpha-D-ribosyl-1-pyrophosphate (PRPP) via the transfer of pyrophosphoryl group from ATP to 1-hydroxyl of ribose-5-phosphate (Rib-5-P). The chain is Ribose-phosphate pyrophosphokinase from Sulfolobus acidocaldarius (strain ATCC 33909 / DSM 639 / JCM 8929 / NBRC 15157 / NCIMB 11770).